The primary structure comprises 210 residues: ATP-dependent Clp protease proteolytic subunit (210 aa).

Ser113 functions as the Nucleophile in the catalytic mechanism. His138 is an active-site residue.

The protein belongs to the peptidase S14 family. Fourteen ClpP subunits assemble into 2 heptameric rings which stack back to back to give a disk-like structure with a central cavity, resembling the structure of eukaryotic proteasomes.

It localises to the cytoplasm. It carries out the reaction Hydrolysis of proteins to small peptides in the presence of ATP and magnesium. alpha-casein is the usual test substrate. In the absence of ATP, only oligopeptides shorter than five residues are hydrolyzed (such as succinyl-Leu-Tyr-|-NHMec, and Leu-Tyr-Leu-|-Tyr-Trp, in which cleavage of the -Tyr-|-Leu- and -Tyr-|-Trp bonds also occurs).. Functionally, cleaves peptides in various proteins in a process that requires ATP hydrolysis. Has a chymotrypsin-like activity. Plays a major role in the degradation of misfolded proteins. The sequence is that of ATP-dependent Clp protease proteolytic subunit from Marinomonas sp. (strain MWYL1).